A 206-amino-acid chain; its full sequence is MKHNNQLPVAQLRKHQQFRIKTFFNQAAQKKARLHARRAQAAAVFPRPTEKLQPVVRKQTQRYNKSTKLGRGFTLQELKAAGISAAFAQSIGIKVDHRRKNRCQESLELNKKRLLAYVSKLVLFPRHQGKAKKGLVNDTADTSSAAQNALQTSVPLPSVSKREKAVSNIAELRKKKVYRIIRQEKTNQKWDGKRKAKAQAAAEPKA.

Positions 184–193 are enriched in basic and acidic residues; it reads EKTNQKWDGK. The interval 184 to 206 is disordered; that stretch reads EKTNQKWDGKRKAKAQAAAEPKA.

It belongs to the eukaryotic ribosomal protein eL13 family.

This Tetrahymena thermophila (strain SB210) protein is Large ribosomal subunit protein eL13 (RPL13).